Here is a 160-residue protein sequence, read N- to C-terminus: Putative pre-16S rRNA nuclease (160 aa).

The protein belongs to the YqgF nuclease family.

It is found in the cytoplasm. Its function is as follows. Could be a nuclease involved in processing of the 5'-end of pre-16S rRNA. This is Putative pre-16S rRNA nuclease from Rhodopseudomonas palustris (strain ATCC BAA-98 / CGA009).